Consider the following 842-residue polypeptide: Elongation factor 2 (842 aa).

The tr-type G domain occupies 17–253 (TNVRNMSVIA…LWGDSYFNPK (237 aa)). Residues 26–33 (AHVDHGKS), 158–161 (NKVD), and 213–215 (SGL) each bind GTP. Diphthamide is present on histidine 699.

Belongs to the TRAFAC class translation factor GTPase superfamily. Classic translation factor GTPase family. EF-G/EF-2 subfamily.

The protein resides in the cytoplasm. The catalysed reaction is GTP + H2O = GDP + phosphate + H(+). Its function is as follows. Catalyzes the GTP-dependent ribosomal translocation step during translation elongation. During this step, the ribosome changes from the pre-translocational (PRE) to the post-translocational (POST) state as the newly formed A-site-bound peptidyl-tRNA and P-site-bound deacylated tRNA move to the P and E sites, respectively. Catalyzes the coordinated movement of the two tRNA molecules, the mRNA and conformational changes in the ribosome. The sequence is that of Elongation factor 2 (EFT1) from Naumovozyma castellii (Yeast).